The following is a 264-amino-acid chain: tRNA pseudouridine synthase A (264 aa).

Catalysis depends on aspartate 51, which acts as the Nucleophile. Residue tyrosine 109 participates in substrate binding.

The protein belongs to the tRNA pseudouridine synthase TruA family. In terms of assembly, homodimer.

It carries out the reaction uridine(38/39/40) in tRNA = pseudouridine(38/39/40) in tRNA. Formation of pseudouridine at positions 38, 39 and 40 in the anticodon stem and loop of transfer RNAs. The sequence is that of tRNA pseudouridine synthase A from Staphylococcus aureus (strain MRSA252).